A 54-amino-acid chain; its full sequence is Large ribosomal subunit protein bL33B (54 aa).

The protein belongs to the bacterial ribosomal protein bL33 family.

The chain is Large ribosomal subunit protein bL33B from Saccharopolyspora erythraea (strain ATCC 11635 / DSM 40517 / JCM 4748 / NBRC 13426 / NCIMB 8594 / NRRL 2338).